The primary structure comprises 918 residues: uncharacterized protein (918 aa).

Disordered regions lie at residues 66–150, 226–283, 326–481, 515–548, 594–707, 737–774, and 800–918; these read AMVH…SSYG, GADG…NADF, ADGT…EFGN, ALEK…GSNL, EITH…NAVK, NHSN…SHLT, and HITH…IIQM. Positions 79–89 are enriched in low complexity; it reads QSSGSSSNTHS. Positions 103–127 are enriched in basic and acidic residues; the sequence is NSEKKDGYNKESKVDEANENTKIKS. Residues 270–281 show a composition bias toward low complexity; it reads SKKAASASGSNA. Composition is skewed to polar residues over residues 326–354, 363–372, and 379–404; these read ADGT…SSDL, KSHSTSNKTD, and ANQS…SSIE. Over residues 430–441 the composition is skewed to low complexity; sequence SSSHSKSASGTS. Residues 515 to 533 show a composition bias toward basic and acidic residues; the sequence is ALEKNHEKNSDGTFKDESK. 2 stretches are compositionally biased toward polar residues: residues 534–545 and 604–619; these read GSNSRVNRTDGG and VAAS…TSMS. Residues 632–647 are compositionally biased toward low complexity; it reads SSQAADSHDAISASSD. Positions 648-660 are enriched in basic and acidic residues; sequence VDAKIVKHADRSE. Residues 661 to 672 show a composition bias toward polar residues; the sequence is SISNDSSNQTAS. Residues 673–688 show a composition bias toward basic and acidic residues; the sequence is EHNDSSKQSEHEKRQN. The segment covering 689–702 has biased composition (polar residues); sequence ADGSFSDVSSNSAK. 4 stretches are compositionally biased toward basic and acidic residues: residues 738-765, 800-814, 830-846, and 883-918; these read HSND…DAKH, HITH…DAGH, EGFK…EGAQ, and LAKD…IIQM.

This is an uncharacterized protein from Caenorhabditis elegans.